The chain runs to 254 residues: Phosphoglycerate mutase 1 (254 aa).

Residues 10-17 (RHGESAWN) and 23-24 (SG) each bind substrate. The active-site Tele-phosphohistidine intermediate is H11. S14 and S23 each carry phosphoserine. At Y26 the chain carries Phosphotyrosine. The residue at position 31 (S31) is a Phosphoserine. Substrate contacts are provided by residues R62, 89–92 (ERHY), and K100. E89 acts as the Proton donor/acceptor in catalysis. N6-acetyllysine is present on K106. 116 to 117 (RR) contacts substrate. Residue S118 is modified to Phosphoserine. 187-188 (GN) is a substrate binding site. Residue K251 is modified to N6-acetyllysine; alternate. K251 bears the N6-succinyllysine; alternate mark. K253 and K254 each carry N6-acetyllysine.

Belongs to the phosphoglycerate mutase family. BPG-dependent PGAM subfamily. Homodimer. Post-translationally, acetylated at Lys-253, Lys-253 and Lys-254 under high glucose condition. Acetylation increases catalytic activity. Under glucose restriction SIRT1 levels dramatically increase and it deacetylates the enzyme. In terms of tissue distribution, expressed in the liver and brain. Not found in the muscle.

It carries out the reaction (2R)-2-phosphoglycerate = (2R)-3-phosphoglycerate. It catalyses the reaction (2R)-3-phospho-glyceroyl phosphate = (2R)-2,3-bisphosphoglycerate + H(+). Catalyzes the interconversion of 2-phosphoglycerate and 3-phosphoglyceratea crucial step in glycolysis, by using 2,3-bisphosphoglycerate. Also catalyzes the interconversion of (2R)-2,3-bisphosphoglycerate and (2R)-3-phospho-glyceroyl phosphate. The chain is Phosphoglycerate mutase 1 from Homo sapiens (Human).